The primary structure comprises 42 residues: Tachystatin-B1 (42 aa).

3 cysteine pairs are disulfide-bonded: C4-C20, C11-C25, and C19-C37.

As to expression, granular hemocytes, small secretory granules.

The protein localises to the secreted. In terms of biological role, exhibits stronger antimicrobial activity against the Gram-positive bacteria (S.aureus (IC(50) is 7.4 ug/ml)) and fungi (C.albicans (IC(50) is 3.0 ug/ml) and P.pastoris (IC(50) is 0.1 ug/ml)) than Gram-negative bacteria (E.coli no inhibition at 100 ug/ml). Binds to chitin (4.3 uM are required to obtain 50% of binding). Does not cause hemolysis on sheep erythrocytes. Has no blocking activity on the P-type calcium channel. In Tachypleus tridentatus (Japanese horseshoe crab), this protein is Tachystatin-B1.